A 556-amino-acid polypeptide reads, in one-letter code: Protein misato homolog 1 (556 aa).

Serine 41 carries the phosphoserine modification.

The protein belongs to the misato family.

Its subcellular location is the mitochondrion outer membrane. It localises to the cytoplasm. In terms of biological role, involved in the regulation of mitochondrial distribution and morphology. Required for mitochondrial fusion and mitochondrial network formation. The sequence is that of Protein misato homolog 1 (Msto1) from Mus musculus (Mouse).